The chain runs to 357 residues: Glutamine synthetase root isozyme 1 (357 aa).

The region spanning 19–99 (IIAEYIWIGG…VMCDCYTPQG (81 aa)) is the GS beta-grasp domain. One can recognise a GS catalytic domain in the interval 106 to 357 (KRYSAAKVFS…AETTILWNGN (252 aa)).

It belongs to the glutamine synthetase family. As to quaternary structure, homooctamer. Found mainly in the cortical tissues of seedling roots, and in the root tip.

It localises to the cytoplasm. The enzyme catalyses L-glutamate + NH4(+) + ATP = L-glutamine + ADP + phosphate + H(+). Plays a role in the flow of nitrogen into nitrogenous organic compounds. This is Glutamine synthetase root isozyme 1 (GLN6) from Zea mays (Maize).